Consider the following 70-residue polypeptide: Cold shock-like protein (70 aa).

The 61-residue stretch at 5–65 (GTVKWFSKDK…DTKGPRAKNV (61 aa)) folds into the CSD domain.

The protein localises to the cytoplasm. This Aquifex aeolicus (strain VF5) protein is Cold shock-like protein (csp).